A 1047-amino-acid polypeptide reads, in one-letter code: Protein masquerade (1047 aa).

The N-terminal stretch at 1 to 30 (MPRHSSTMSRLVLPLIFSILLVSKPSPSQA) is a signal peptide. The segment at 54-87 (KDCPGVCVHTLATLICYEVLDDVACPSPSMKCCI) is CLIP 1. 3 disulfides stabilise this stretch: cysteine 56-cysteine 85, cysteine 60-cysteine 78, and cysteine 69-cysteine 86. N-linked (GlcNAc...) asparagine glycosylation is present at asparagine 95. Composition is skewed to low complexity over residues 98–139 (AVRA…STTP) and 148–175 (KRPA…VATA). Residues 98–189 (AVRATTTPKT…KEEATKADDA (92 aa)) form a disordered region. Over residues 176–189 (KPKDKEEATKADDA) the composition is skewed to basic and acidic residues. The interval 192–224 (DCTGVCVADRIAEYCEAYLTSDGLCKEGTKCCV) is CLIP 2. Cystine bridges form between cysteine 193/cysteine 222, cysteine 197/cysteine 216, and cysteine 206/cysteine 223. A glycan (N-linked (GlcNAc...) asparagine) is linked at asparagine 251. The segment at 252–335 (QTLSEKSAPA…PLSNKLKSGQ (84 aa)) is disordered. The span at 263–280 (SSSTSTTSTTTTTSTTTT) shows a compositional bias: low complexity. An N-linked (GlcNAc...) asparagine glycan is attached at asparagine 287. Acidic residues predominate over residues 307–325 (AAEEEEEQETEEDGEEEEP). Residues 343–374 (ECEGECMNGIFAIFCDDIDSDAFCPGEESCCV) are CLIP 3. 3 disulfides stabilise this stretch: cysteine 344–cysteine 372, cysteine 348–cysteine 366, and cysteine 357–cysteine 373. The interval 376 to 428 (GGASEATPSSKAPPTKPAIKHAPKPAAKPARPASPPPAPPSSTSGGGGGGDFL) is disordered. Residues 457–492 (RCPGFCLLNIMAAFCERPSVLVSTPTTCAKGSVCCD) are CLIP 4. 3 disulfide bridges follow: cysteine 458-cysteine 490, cysteine 462-cysteine 484, and cysteine 471-cysteine 491. The segment at 498-527 (APKPKLPPPTPSPTASPTAPPYVLPNTPSP) is disordered. A compositionally biased stretch (pro residues) spans 501–527 (PKLPPPTPSPTASPTAPPYVLPNTPSP). Positions 532 to 567 (ECPGSCIVSLLSFTCFKNAEMTDLFRCKRSGQICCA) are CLIP 5. 3 disulfide bridges follow: cysteine 533–cysteine 565, cysteine 537–cysteine 558, and cysteine 546–cysteine 566. N-linked (GlcNAc...) asparagine glycosylation is present at asparagine 582. The disordered stretch occupies residues 583–673 (DTAYYPAPPP…TTTTTTTTPR (91 aa)). Composition is skewed to pro residues over residues 588-606 (PAPP…PQTP), 613-638 (NPPP…PPAP), and 650-661 (GLPPQPQPPMTT). A compositionally biased stretch (low complexity) spans 662–672 (PPTTTTTTTTP). Cystine bridges form between cysteine 682–cysteine 916, cysteine 829–cysteine 845, cysteine 930–cysteine 1001, cysteine 961–cysteine 981, and cysteine 991–cysteine 1019. 2 N-linked (GlcNAc...) asparagine glycosylation sites follow: asparagine 726 and asparagine 794. Residues 803-1043 (VVGGEDGENG…FIGWINQIIS (241 aa)) form a peptidase S1 region.

Belongs to the peptidase S1 family. CLIP subfamily. Proteolytically cleaved and thereafter secreted.

The protein resides in the secreted. Its subcellular location is the cell projection. It is found in the axon. Its function is as follows. In embryogenesis, has a role in somatic muscle attachment and in the development of axonal pathways probably by stabilizing cell-matrix adhesion and/or by acting as a competitive antagonist of serine proteases. This Drosophila melanogaster (Fruit fly) protein is Protein masquerade.